We begin with the raw amino-acid sequence, 240 residues long: Tumor protein p53-inducible nuclear protein 1 (240 aa).

An LIR motif is present at residues 25–37; that stretch reads EKEDDEWILVDFI.

As to quaternary structure, interacts with p53/TP53 and HIPK2. Interacts with PRKCG, GABARAP, GABARAPL1, GABARAPL2, MAP1LC3A, MAP1LC3B and MAP1LC3C. As to expression, ubiquitously expressed.

Its subcellular location is the cytoplasm. It is found in the cytosol. It localises to the nucleus. The protein resides in the PML body. The protein localises to the cytoplasmic vesicle. Its subcellular location is the autophagosome. Functionally, antiproliferative and proapoptotic protein involved in cell stress response which acts as a dual regulator of transcription and autophagy. Acts as a positive regulator of autophagy. In response to cellular stress or activation of autophagy, relocates to autophagosomes where it interacts with autophagosome-associated proteins GABARAP, GABARAPL1/L2, MAP1LC3A/B/C and regulates autophagy. Acts as an antioxidant and plays a major role in p53/TP53-driven oxidative stress response. Possesses both a p53/TP53-independent intracellular reactive oxygen species (ROS) regulatory function and a p53/TP53-dependent transcription regulatory function. Positively regulates p53/TP53 and p73/TP73 and stimulates their capacity to induce apoptosis and regulate cell cycle. In response to double-strand DNA breaks, promotes p53/TP53 phosphorylation on 'Ser-46' and subsequent apoptosis. Acts as a tumor suppressor by inducing cell death by an autophagy and caspase-dependent mechanism. Can reduce cell migration by regulating the expression of SPARC. This is Tumor protein p53-inducible nuclear protein 1 (TP53INP1) from Homo sapiens (Human).